A 255-amino-acid chain; its full sequence is Small ribosomal subunit protein uS2 (255 aa).

Residues 231 to 255 (RLQTGAEEEFSTEGEEVVEETPAEA) are disordered. Residues 236 to 255 (AEEEFSTEGEEVVEETPAEA) are compositionally biased toward acidic residues.

It belongs to the universal ribosomal protein uS2 family.

This Geobacter sp. (strain M21) protein is Small ribosomal subunit protein uS2.